We begin with the raw amino-acid sequence, 242 residues long: KKCIQSEDKKWFTPREFEIEGDRRASKNWKLSIRCGGYTLKFLMENKLLPEPPSTRKKRILKSHNNTLVDPCAVHKKKNPDASVNLSEFLKKCSEMWKTIFAKEKGKFEDMAKADKAHYEREMKTYIPSKGEKKKKFKDPNAPKRPPLAFFLFCSEYRPKIKGEHPGLSIDDVVKKLAEMWNNTAAADKQFYEKKAAKLKEKYKKDIAADRAKGKPNSAKKRVVKAEKSKKKKEEEEDEVDE.

One can recognise an SAND domain in the interval 1–50 (KKCIQSEDKKWFTPREFEIEGDRRASKNWKLSIRCGGYTLKFLMENKLLP). 2 DNA-binding regions (HMG box) span residues 51-127 (EPPS…KTYI) and 143-211 (PKRP…AADR). The short motif at 91-108 (KKCSEMWKTIFAKEKGKF) is the Nuclear localization signal element. The interval 205–242 (KDIAADRAKGKPNSAKKRVVKAEKSKKKKEEEEDEVDE) is disordered. A compositionally biased stretch (basic residues) spans 218–231 (SAKKRVVKAEKSKK).

As to quaternary structure, homodimer. Interacts with members of the HP1 family of nonhistone chromosomal protein, such as CBX5 and CBX3 via the PxVxL motif. Interacts with ETS1; the interaction is direct and modulates ETS1 transcriptional activity. Interacts with the MRN complex which is composed of two heterodimers RAD50/MRE11 associated with a single NBN; recruits the complex to PML-related bodies. Interacts with HIPK2; positively regulates TP53-dependent transcription. Interacts with CASP8AP2; may negatively regulate CASP8AP2 export from the nucleus to the cytoplasm. Sumoylated. Sumoylated with SUMO1. Sumoylation depends on a functional nuclear localization signal but is not necessary for nuclear import or nuclear body targeting. Sumoylation may stabilize the interaction with CBX5. In terms of processing, phosphorylated.

Its subcellular location is the nucleus. It is found in the PML body. The protein resides in the nuclear body. It localises to the cytoplasm. In terms of biological role, together with PML, this tumor suppressor is a major constituent of the PML bodies, a subnuclear organelle involved in a large number of physiological processes including cell growth, differentiation and apoptosis. Functions as a transcriptional coactivator of ETS1 and ETS2. Under certain conditions, it may also act as a corepressor of ETS1 preventing its binding to DNA. Through the regulation of ETS1 it may play a role in angiogenesis, controlling endothelial cell motility and invasion. Through interaction with the MRN complex it may be involved in the regulation of telomeres lengthening. May also regulate TP53-mediated transcription and through CASP8AP2, regulate FAS-mediated apoptosis. May also play a role in infection by viruses through mechanisms that may involve chromatin and/or transcriptional regulation. This Hylobates lar (Lar gibbon) protein is Nuclear autoantigen Sp-100 (SP100).